A 226-amino-acid chain; its full sequence is MKKINIAIDGPAGAGKSTISKLLAKKLGYIHIDTGAMYRAIGLKVLNSNIKSNEVEKILEVLDNTDIQIKIVAGSQLVLLDGEDVTEKIRQPSVSMYASDVSKIKEVREKLVKIQQDLAKQKGVIMDGRDIGTYVLPDAELKIFLTATAEERAKRRFLELKEKGYEVDYYQLLDEIKQRDLNDMTRELAPLRVAEDAIVIDSTNLTIEEVLQKVLELFYKVIGNEV.

An ATP-binding site is contributed by 10–18 (GPAGAGKST).

Belongs to the cytidylate kinase family. Type 1 subfamily.

It is found in the cytoplasm. The enzyme catalyses CMP + ATP = CDP + ADP. The catalysed reaction is dCMP + ATP = dCDP + ADP. In Caldicellulosiruptor saccharolyticus (strain ATCC 43494 / DSM 8903 / Tp8T 6331), this protein is Cytidylate kinase.